A 228-amino-acid polypeptide reads, in one-letter code: Endo-1,4-beta-xylanase A (228 aa).

The N-terminal stretch at 1 to 27 is a signal peptide; it reads MNLRKLRLLFVMCIGLTLILTAVPAHA. The GH11 domain occupies 29 to 222; that stretch reads TITNNEMGNH…SSGSANVMTN (194 aa). The active-site Nucleophile is E120. E209 acts as the Proton donor in catalysis.

The protein belongs to the glycosyl hydrolase 11 (cellulase G) family.

The catalysed reaction is Endohydrolysis of (1-&gt;4)-beta-D-xylosidic linkages in xylans.. It participates in glycan degradation; xylan degradation. The chain is Endo-1,4-beta-xylanase A (xynA) from Bacillus pumilus (Bacillus mesentericus).